The primary structure comprises 41 residues: Large ribosomal subunit protein bL36 (41 aa).

It belongs to the bacterial ribosomal protein bL36 family.

The polypeptide is Large ribosomal subunit protein bL36 (Rhizobium rhizogenes (strain K84 / ATCC BAA-868) (Agrobacterium radiobacter)).